Reading from the N-terminus, the 266-residue chain is Undecaprenyl-diphosphatase (266 aa).

Transmembrane regions (helical) follow at residues 4–24 (ILRVIILGFVQGISEFLPISS), 39–59 (LPIVFDIYLHFATVLVVIIYY), 88–108 (LNLILLILIITFFTALIGIFI), 114–134 (LFTFKLVLFNFIVTSILLFLI), 147–167 (IFFSGLLIGIMQGIGAMPGIS), 186–206 (SLEISFLSLIPIVFGSLFLKY), 214–234 (IIFNIFEINLGAIFAFIFGLF), and 246–266 (SKLYYFSIYLVSVVSLVYFLV).

This sequence belongs to the UppP family.

It is found in the cell inner membrane. The catalysed reaction is di-trans,octa-cis-undecaprenyl diphosphate + H2O = di-trans,octa-cis-undecaprenyl phosphate + phosphate + H(+). Catalyzes the dephosphorylation of undecaprenyl diphosphate (UPP). Confers resistance to bacitracin. The chain is Undecaprenyl-diphosphatase from Borrelia recurrentis (strain A1).